The primary structure comprises 153 residues: Endoribonuclease YbeY (153 aa).

Zn(2+) is bound by residues His118, His122, and His128.

It belongs to the endoribonuclease YbeY family. It depends on Zn(2+) as a cofactor.

Its subcellular location is the cytoplasm. Its function is as follows. Single strand-specific metallo-endoribonuclease involved in late-stage 70S ribosome quality control and in maturation of the 3' terminus of the 16S rRNA. The sequence is that of Endoribonuclease YbeY from Pelagibacter ubique (strain HTCC1062).